The chain runs to 735 residues: Putative RNA polymerase II subunit B1 CTD phosphatase RPAP2 homolog (735 aa).

The RTR1-type zinc finger occupies 33–118 (AARKLMSRSD…LQEARTLEFD (86 aa)). Cys-56, Cys-61, Cys-94, and Cys-98 together coordinate Zn(2+). Disordered regions lie at residues 179–201 (VPFD…QEKH), 349–374 (GKNT…KSRK), and 519–538 (EHSE…WPNK). Positions 349-364 (GKNTLSGSSSGSNTKG) are enriched in low complexity. Residues 519–530 (EHSEEEMTEEEP) show a composition bias toward acidic residues.

This sequence belongs to the RPAP2 family.

It localises to the nucleus. The catalysed reaction is O-phospho-L-seryl-[protein] + H2O = L-seryl-[protein] + phosphate. The enzyme catalyses O-phospho-L-threonyl-[protein] + H2O = L-threonyl-[protein] + phosphate. Its function is as follows. Putative RNA polymerase II subunit B1 C-terminal domain (CTD) phosphatase involved in RNA polymerase II transcription regulation. The sequence is that of Putative RNA polymerase II subunit B1 CTD phosphatase RPAP2 homolog from Arabidopsis thaliana (Mouse-ear cress).